We begin with the raw amino-acid sequence, 338 residues long: Ferrochelatase (338 aa).

Fe cation contacts are provided by H210 and E291.

It belongs to the ferrochelatase family.

The protein localises to the cytoplasm. It catalyses the reaction heme b + 2 H(+) = protoporphyrin IX + Fe(2+). The protein operates within porphyrin-containing compound metabolism; protoheme biosynthesis; protoheme from protoporphyrin-IX: step 1/1. Its function is as follows. Catalyzes the ferrous insertion into protoporphyrin IX. This chain is Ferrochelatase, found in Helicobacter acinonychis (strain Sheeba).